We begin with the raw amino-acid sequence, 286 residues long: Bifunctional protein FolD (286 aa).

NADP(+) is bound by residues 165–167 (GRS) and Ser-190.

The protein belongs to the tetrahydrofolate dehydrogenase/cyclohydrolase family. In terms of assembly, homodimer.

It carries out the reaction (6R)-5,10-methylene-5,6,7,8-tetrahydrofolate + NADP(+) = (6R)-5,10-methenyltetrahydrofolate + NADPH. The enzyme catalyses (6R)-5,10-methenyltetrahydrofolate + H2O = (6R)-10-formyltetrahydrofolate + H(+). The protein operates within one-carbon metabolism; tetrahydrofolate interconversion. Its function is as follows. Catalyzes the oxidation of 5,10-methylenetetrahydrofolate to 5,10-methenyltetrahydrofolate and then the hydrolysis of 5,10-methenyltetrahydrofolate to 10-formyltetrahydrofolate. This is Bifunctional protein FolD from Staphylococcus aureus (strain bovine RF122 / ET3-1).